The chain runs to 71 residues: Prokaryotic ubiquitin-like protein Pup (71 aa).

Residues 1–18 (MATRDSGGQSQTGRSQQG) show a composition bias toward low complexity. The tract at residues 1–42 (MATRDSGGQSQTGRSQQGEEIEDVTTEASPEVAERHAEITED) is disordered. Residues 27–65 (EASPEVAERHAEITEDVDDLLDEIDSVLEENAEEFVRGY) form an ARC ATPase binding region. Residues 31-60 (EVAERHAEITEDVDDLLDEIDSVLEENAEE) adopt a coiled-coil conformation. Glutamate 71 is covalently cross-linked (Isoglutamyl lysine isopeptide (Glu-Lys) (interchain with K-? in acceptor proteins)).

The protein belongs to the prokaryotic ubiquitin-like protein family. In terms of assembly, strongly interacts with the proteasome-associated ATPase ARC through a hydrophobic interface; the interacting region of Pup lies in its C-terminal half. There is one Pup binding site per ARC hexamer ring.

It participates in protein degradation; proteasomal Pup-dependent pathway. Its function is as follows. Protein modifier that is covalently attached to lysine residues of substrate proteins, thereby targeting them for proteasomal degradation. The tagging system is termed pupylation. In Salinispora arenicola (strain CNS-205), this protein is Prokaryotic ubiquitin-like protein Pup.